Here is a 302-residue protein sequence, read N- to C-terminus: MVSQEQIEAIGGVLNNKDRPLKERFRALFTLKNIGGKTAIDAISKAFDDDSALLKHELAYCLGQMQDPTALEILTKVLKDTTQEPMVRHEAAEAMGAIGHADVLAILEEYKKDPVVEVAETCAIALDRVRWLQSGQQVADNNPYASVDPSPPTAGDKSVAELKAIYLDAKQTLFDRYRAMFSLRNLCTEESVLAIAEGLKDSSALFRHEVAFVLGQLQEPCSIPYLQENLEDHKENEMVRHECAEALGAIATDDCIQILTRYADDEKRVVKESCVIALDMCEYENSPEFQYADGLSKLDGTK.

6 HEAT-like PBS-type repeats span residues 23–49, 54–80, 87–113, 175–201, 206–232, and 239–265; these read ERFR…AFDD, LKHE…VLKD, VRHE…YKKD, DRYR…GLKD, FRHE…NLED, and VRHE…YADD. Fe cation is bound by residues histidine 56, glutamate 57, histidine 89, and glutamate 90. Histidine 208, glutamate 209, histidine 241, and glutamate 242 together coordinate Fe cation.

Belongs to the deoxyhypusine hydroxylase family. The cofactor is Fe(2+).

It is found in the endoplasmic reticulum membrane. It catalyses the reaction [eIF5A protein]-deoxyhypusine + AH2 + O2 = [eIF5A protein]-hypusine + A + H2O. It participates in protein modification; eIF5A hypusination. In terms of biological role, catalyzes the hydroxylation of the N(6)-(4-aminobutyl)-L-lysine intermediate to form hypusine, an essential post-translational modification only found in mature eIF-5A factor. Essential for organismal viability and plays a role in a wide number of important processes such as cell growth and proliferation, and regulates induction of autophagy and protein synthesis. Has a role in eIF-5A-mediated translational control. The sequence is that of Deoxyhypusine hydroxylase from Drosophila pseudoobscura pseudoobscura (Fruit fly).